Here is a 304-residue protein sequence, read N- to C-terminus: Protein transport protein sec13 (304 aa).

WD repeat units lie at residues 12–51 (GHDDMIHDAVLDYYGRRLATCSSDRTIKIFEIEGESQRLV), 56–97 (GHDG…WQRI), 102–143 (LHKA…WEHN), 147–203 (AHGL…NGYK), 211–253 (GHTD…PGEW), and 259–298 (NFDAAVWRVSWSLSGNVLAASSDNNKVTLWKENLKGEWEN).

It belongs to the WD repeat SEC13 family. In terms of assembly, the COPII coat is composed of at least 5 proteins: the sec23/24 complex, the sec13/31 complex, and the protein vtr-7/sar1. Component of the nuclear pore complex (NPC). NPC constitutes the exclusive means of nucleocytoplasmic transport. NPCs allow the passive diffusion of ions and small molecules and the active, nuclear transport receptor-mediated bidirectional transport of macromolecules such as proteins, RNAs, ribonucleoparticles (RNPs), and ribosomal subunits across the nuclear envelope. Due to its 8-fold rotational symmetry, all subunits are present with 8 copies or multiples thereof.

Its subcellular location is the cytoplasmic vesicle. The protein resides in the COPII-coated vesicle membrane. It localises to the endoplasmic reticulum membrane. The protein localises to the nucleus. It is found in the nuclear pore complex. Functionally, component of the coat protein complex II (COPII) which promotes the formation of transport vesicles from the endoplasmic reticulum (ER). The coat has two main functions, the physical deformation of the endoplasmic reticulum membrane into vesicles and the selection of cargo molecules. It also functions as a component of the nuclear pore complex (NPC). NPC components, collectively referred to as nucleoporins (NUPs), can play the role of both NPC structural components and of docking or interaction partners for transiently associated nuclear transport factors. Nup-20/sec13 is required for efficient mRNA export from the nucleus to the cytoplasm and for correct nuclear pore biogenesis and distribution. This chain is Protein transport protein sec13 (nup-20), found in Neurospora crassa (strain ATCC 24698 / 74-OR23-1A / CBS 708.71 / DSM 1257 / FGSC 987).